The sequence spans 469 residues: Biotin synthase (469 aa).

Positions 51-278 (MTVKVNYLVN…DKEIRMAGGR (228 aa)) constitute a Radical SAM core domain. Cysteine 66, cysteine 70, and cysteine 73 together coordinate [4Fe-4S] cluster. [2Fe-2S] cluster-binding residues include cysteine 110, cysteine 143, cysteine 203, and arginine 273. A disordered region spans residues 326–469 (AGPDPSRDRH…GAGTSVAPNA (144 aa)). Low complexity-rich tracts occupy residues 363 to 384 (GSAA…APAD) and 405 to 428 (AGGP…MSPA).

Belongs to the radical SAM superfamily. Biotin synthase family. In terms of assembly, homodimer. The cofactor is [4Fe-4S] cluster. [2Fe-2S] cluster is required as a cofactor.

The catalysed reaction is (4R,5S)-dethiobiotin + (sulfur carrier)-SH + 2 reduced [2Fe-2S]-[ferredoxin] + 2 S-adenosyl-L-methionine = (sulfur carrier)-H + biotin + 2 5'-deoxyadenosine + 2 L-methionine + 2 oxidized [2Fe-2S]-[ferredoxin]. It participates in cofactor biosynthesis; biotin biosynthesis; biotin from 7,8-diaminononanoate: step 2/2. In terms of biological role, catalyzes the conversion of dethiobiotin (DTB) to biotin by the insertion of a sulfur atom into dethiobiotin via a radical-based mechanism. This is Biotin synthase from Kocuria rhizophila (strain ATCC 9341 / DSM 348 / NBRC 103217 / DC2201).